A 107-amino-acid chain; its full sequence is MKVYLIYVLAAVAEIAGCFSFWAWLKLGKTGWILLPGMVALAAFAWLLTLVATEAAGRAYAAYGGIYIAASLFWLWGVEGHAPDRWDIAGGVVCLAGTAIILFGPRG.

The next 4 helical transmembrane spans lie at 5-25, 32-52, 59-79, and 85-105; these read LIYV…WAWL, WILL…TLVA, AYAA…WGVE, and RWDI…LFGP.

This sequence belongs to the UPF0060 family.

It is found in the cell inner membrane. The sequence is that of UPF0060 membrane protein Atu1058 from Agrobacterium fabrum (strain C58 / ATCC 33970) (Agrobacterium tumefaciens (strain C58)).